Reading from the N-terminus, the 200-residue chain is Mediator of RNA polymerase II transcription subunit 22 (200 aa).

Positions 93–122 (SVNEAIDQRNQQLRTLQEECDRKLITLRDE) form a coiled coil. The disordered stretch occupies residues 166–200 (LSAPLLASPEPSAGPLQVAAPAHSHAGGPGPTEHA).

This sequence belongs to the Mediator complex subunit 22 family. As to quaternary structure, component of the Mediator complex, which is composed of MED1, MED4, MED6, MED7, MED8, MED9, MED10, MED11, MED12, MED13, MED13L, MED14, MED15, MED16, MED17, MED18, MED19, MED20, MED21, MED22, MED23, MED24, MED25, MED26, MED27, MED29, MED30, MED31, CCNC, CDK8 and CDC2L6/CDK11. The MED12, MED13, CCNC and CDK8 subunits form a distinct module termed the CDK8 module. Mediator containing the CDK8 module is less active than Mediator lacking this module in supporting transcriptional activation. Individual preparations of the Mediator complex lacking one or more distinct subunits have been variously termed ARC, CRSP, DRIP, PC2, SMCC and TRAP.

Its subcellular location is the nucleus. Its function is as follows. Component of the Mediator complex, a coactivator involved in the regulated transcription of nearly all RNA polymerase II-dependent genes. Mediator functions as a bridge to convey information from gene-specific regulatory proteins to the basal RNA polymerase II transcription machinery. Mediator is recruited to promoters by direct interactions with regulatory proteins and serves as a scaffold for the assembly of a functional preinitiation complex with RNA polymerase II and the general transcription factors. This chain is Mediator of RNA polymerase II transcription subunit 22 (MED22), found in Homo sapiens (Human).